Reading from the N-terminus, the 137-residue chain is Large ribosomal subunit protein uL16 (137 aa).

It belongs to the universal ribosomal protein uL16 family. As to quaternary structure, part of the 50S ribosomal subunit.

In terms of biological role, binds 23S rRNA and is also seen to make contacts with the A and possibly P site tRNAs. In Acinetobacter baumannii (strain SDF), this protein is Large ribosomal subunit protein uL16.